A 146-amino-acid chain; its full sequence is Actin-depolymerizing factor 6 (146 aa).

The residue at position 13 (serine 13) is a Phosphoserine. The 133-residue stretch at 14-146 folds into the ADF-H domain; it reads GMGVADESKT…DLEVLRERAN (133 aa).

It belongs to the actin-binding proteins ADF family. Phosphorylated. Expressed in vascular tissues of all organs.

Its subcellular location is the cytoplasm. The protein localises to the cytoskeleton. In terms of biological role, actin-depolymerizing protein. Severs actin filaments (F-actin) and binds to actin monomers. In Arabidopsis thaliana (Mouse-ear cress), this protein is Actin-depolymerizing factor 6 (ADF6).